A 59-amino-acid polypeptide reads, in one-letter code: DNA gyrase inhibitor YacG (59 aa).

4 residues coordinate Zn(2+): Cys9, Cys12, Cys27, and Cys31.

The protein belongs to the DNA gyrase inhibitor YacG family. Interacts with GyrB. Requires Zn(2+) as cofactor.

Its function is as follows. Inhibits all the catalytic activities of DNA gyrase by preventing its interaction with DNA. Acts by binding directly to the C-terminal domain of GyrB, which probably disrupts DNA binding by the gyrase. The protein is DNA gyrase inhibitor YacG of Geotalea daltonii (strain DSM 22248 / JCM 15807 / FRC-32) (Geobacter daltonii).